The following is a 129-amino-acid chain: Fluoride-specific ion channel FluC (129 aa).

Transmembrane regions (helical) follow at residues 5-25, 32-52, 60-80, and 99-119; these read LTIA…SGWV, AFPF…GLIM, LIPA…LTTF, and AMVN…LGVI. Residues Gly75 and Thr78 each coordinate Na(+).

It belongs to the fluoride channel Fluc/FEX (TC 1.A.43) family.

It localises to the cell inner membrane. It carries out the reaction fluoride(in) = fluoride(out). Its activity is regulated as follows. Na(+) is not transported, but it plays an essential structural role and its presence is essential for fluoride channel function. Functionally, fluoride-specific ion channel. Important for reducing fluoride concentration in the cell, thus reducing its toxicity. This is Fluoride-specific ion channel FluC from Pelobacter propionicus (strain DSM 2379 / NBRC 103807 / OttBd1).